The chain runs to 126 residues: Hydrogenase maturation factor HypA (126 aa).

Position 2 (His2) interacts with Ni(2+). Cys78, Cys81, Cys97, and Cys100 together coordinate Zn(2+).

The protein belongs to the HypA/HybF family.

Its function is as follows. Involved in the maturation of [NiFe] hydrogenases. Required for nickel insertion into the metal center of the hydrogenase. In Methanococcus maripaludis (strain DSM 14266 / JCM 13030 / NBRC 101832 / S2 / LL), this protein is Hydrogenase maturation factor HypA.